Here is a 395-residue protein sequence, read N- to C-terminus: S-adenosylmethionine synthase (395 aa).

His18 is a binding site for ATP. Residue Asp20 participates in Mg(2+) binding. Glu46 lines the K(+) pocket. 2 residues coordinate L-methionine: Glu59 and Gln103. The segment at 103-113 (QSADIAVGVDS) is flexible loop. ATP contacts are provided by residues 170 to 172 (DAK), 235 to 236 (KF), Asp244, 250 to 251 (RK), Ala267, and Lys271. An L-methionine-binding site is contributed by Asp244. Lys275 contributes to the L-methionine binding site.

The protein belongs to the AdoMet synthase family. Homotetramer; dimer of dimers. Requires Mg(2+) as cofactor. K(+) serves as cofactor.

The protein localises to the cytoplasm. The enzyme catalyses L-methionine + ATP + H2O = S-adenosyl-L-methionine + phosphate + diphosphate. It functions in the pathway amino-acid biosynthesis; S-adenosyl-L-methionine biosynthesis; S-adenosyl-L-methionine from L-methionine: step 1/1. Functionally, catalyzes the formation of S-adenosylmethionine (AdoMet) from methionine and ATP. The overall synthetic reaction is composed of two sequential steps, AdoMet formation and the subsequent tripolyphosphate hydrolysis which occurs prior to release of AdoMet from the enzyme. The sequence is that of S-adenosylmethionine synthase from Granulibacter bethesdensis (strain ATCC BAA-1260 / CGDNIH1).